The chain runs to 410 residues: Peptidase T (410 aa).

Zn(2+) is bound at residue histidine 77. Aspartate 79 is an active-site residue. Zn(2+) is bound at residue aspartate 140. Catalysis depends on glutamate 174, which acts as the Proton acceptor. Positions 175, 197, and 379 each coordinate Zn(2+).

It belongs to the peptidase M20B family. It depends on Zn(2+) as a cofactor.

The protein localises to the cytoplasm. The catalysed reaction is Release of the N-terminal residue from a tripeptide.. Cleaves the N-terminal amino acid of tripeptides. The polypeptide is Peptidase T (Desulfitobacterium hafniense (strain Y51)).